Reading from the N-terminus, the 609-residue chain is Proline--tRNA ligase (609 aa).

This sequence belongs to the class-II aminoacyl-tRNA synthetase family. ProS type 1 subfamily. In terms of assembly, homodimer.

Its subcellular location is the cytoplasm. The catalysed reaction is tRNA(Pro) + L-proline + ATP = L-prolyl-tRNA(Pro) + AMP + diphosphate. Its function is as follows. Catalyzes the attachment of proline to tRNA(Pro) in a two-step reaction: proline is first activated by ATP to form Pro-AMP and then transferred to the acceptor end of tRNA(Pro). As ProRS can inadvertently accommodate and process non-cognate amino acids such as alanine and cysteine, to avoid such errors it has two additional distinct editing activities against alanine. One activity is designated as 'pretransfer' editing and involves the tRNA(Pro)-independent hydrolysis of activated Ala-AMP. The other activity is designated 'posttransfer' editing and involves deacylation of mischarged Ala-tRNA(Pro). The misacylated Cys-tRNA(Pro) is not edited by ProRS. This is Proline--tRNA ligase from Synechococcus sp. (strain JA-2-3B'a(2-13)) (Cyanobacteria bacterium Yellowstone B-Prime).